Here is a 194-residue protein sequence, read N- to C-terminus: ATP-dependent Clp protease proteolytic subunit (194 aa).

Residue Ser-98 is the Nucleophile of the active site. The active site involves His-123.

It belongs to the peptidase S14 family. In terms of assembly, fourteen ClpP subunits assemble into 2 heptameric rings which stack back to back to give a disk-like structure with a central cavity, resembling the structure of eukaryotic proteasomes.

It is found in the cytoplasm. It catalyses the reaction Hydrolysis of proteins to small peptides in the presence of ATP and magnesium. alpha-casein is the usual test substrate. In the absence of ATP, only oligopeptides shorter than five residues are hydrolyzed (such as succinyl-Leu-Tyr-|-NHMec, and Leu-Tyr-Leu-|-Tyr-Trp, in which cleavage of the -Tyr-|-Leu- and -Tyr-|-Trp bonds also occurs).. In terms of biological role, cleaves peptides in various proteins in a process that requires ATP hydrolysis. Has a chymotrypsin-like activity. Plays a major role in the degradation of misfolded proteins. In Staphylococcus saprophyticus subsp. saprophyticus (strain ATCC 15305 / DSM 20229 / NCIMB 8711 / NCTC 7292 / S-41), this protein is ATP-dependent Clp protease proteolytic subunit.